The chain runs to 242 residues: Ribosomal RNA small subunit methyltransferase G (242 aa).

S-adenosyl-L-methionine-binding positions include Gly78, Phe83, 129–130, and Arg148; that span reads AE.

It belongs to the methyltransferase superfamily. RNA methyltransferase RsmG family.

It is found in the cytoplasm. Its function is as follows. Specifically methylates the N7 position of a guanine in 16S rRNA. In Lachnoclostridium phytofermentans (strain ATCC 700394 / DSM 18823 / ISDg) (Clostridium phytofermentans), this protein is Ribosomal RNA small subunit methyltransferase G.